The following is an 878-amino-acid chain: Pyruvate, phosphate dikinase (878 aa).

The interval 1–347 (MKKLIYYFGS…LYILQTRTAK (347 aa)) is N-terminal. Arg96 provides a ligand contact to ATP. The linker 1 stretch occupies residues 348–404 (RTAIAAINIAVQMVEEKLISKEQALMRIDPESLNQLLHTRIDYSKGLTSIAEGLPAS). The central stretch occupies residues 405–502 (PGAATGIAVF…VIKQGDIITI (98 aa)). Thr457 is subject to Phosphothreonine; by PDRP1. His459 serves as the catalytic Tele-phosphohistidine intermediate. Residues 503 to 537 (DGGSGKIFLGEMPLIQPTFSEESKLILDWADEISS) form a linker 2 region. A C-terminal region spans residues 538-878 (LKVRANAETV…AAAQAKIKHG (341 aa)). Substrate-binding residues include Arg565, Arg621, Glu749, Gly770, Thr771, Asn772, and Asp773. Mg(2+) is bound at residue Glu749. Asp773 serves as a coordination point for Mg(2+). Cys835 functions as the Proton donor in the catalytic mechanism.

This sequence belongs to the PEP-utilizing enzyme family. As to quaternary structure, homodimer. Requires Mg(2+) as cofactor. Post-translationally, phosphorylation of Thr-457 in the dark inactivates the enzyme. Dephosphorylation upon light stimulation reactivates the enzyme.

The catalysed reaction is pyruvate + phosphate + ATP = phosphoenolpyruvate + AMP + diphosphate + H(+). Activated by light-induced dephosphorylation. Inhibited by dark-induced phosphorylation. Both reactions are catalyzed by PDRP1. Catalyzes the reversible phosphorylation of pyruvate and phosphate. This Rickettsia conorii (strain ATCC VR-613 / Malish 7) protein is Pyruvate, phosphate dikinase (ppdK).